The sequence spans 261 residues: Cytochrome c oxidase subunit 3 (261 aa).

Residues 1–15 (MTHQTHAYHMVNPSP) are Mitochondrial matrix-facing. Residues 16–34 (WPLTGALSALLMTSGLAMW) form a helical membrane-spanning segment. The Mitochondrial intermembrane segment spans residues 35–40 (FHYNLT). The chain crosses the membrane as a helical span at residues 41–66 (LLLTLGMTTNLLTMYQWWRDIIREST). At 67–72 (FQGHHT) the chain is on the mitochondrial matrix side. A helical membrane pass occupies residues 73–105 (PIVQKGLRYGMILFIISEVFFFAGFFWAFYHSS). Residues 106–128 (LAPTPELGGCWPPTGIIPLNPLE) lie on the Mitochondrial intermembrane side of the membrane. Residues 129 to 152 (VPLLNTSVLLASGVSITWAHHSLM) traverse the membrane as a helical segment. At 153-155 (EGN) the chain is on the mitochondrial matrix side. The chain crosses the membrane as a helical span at residues 156-183 (RKHMLQALFITISLGVYFTLLQASEYYE). The Mitochondrial intermembrane segment spans residues 184 to 190 (TSFTISD). The helical transmembrane segment at 191 to 223 (GVYGSTFFMATGFHGLHVIIGSTFLIVCFLRQL) threads the bilayer. Topologically, residues 224–232 (KYHFTSNHH) are mitochondrial matrix. A helical transmembrane segment spans residues 233-256 (FGFEAAAWYWHFVDVVWLFLYVSI). Topologically, residues 257-261 (YWWGS) are mitochondrial intermembrane.

The protein belongs to the cytochrome c oxidase subunit 3 family. Component of the cytochrome c oxidase (complex IV, CIV), a multisubunit enzyme composed of 14 subunits. The complex is composed of a catalytic core of 3 subunits MT-CO1, MT-CO2 and MT-CO3, encoded in the mitochondrial DNA, and 11 supernumerary subunits COX4I, COX5A, COX5B, COX6A, COX6B, COX6C, COX7A, COX7B, COX7C, COX8 and NDUFA4, which are encoded in the nuclear genome. The complex exists as a monomer or a dimer and forms supercomplexes (SCs) in the inner mitochondrial membrane with NADH-ubiquinone oxidoreductase (complex I, CI) and ubiquinol-cytochrome c oxidoreductase (cytochrome b-c1 complex, complex III, CIII), resulting in different assemblies (supercomplex SCI(1)III(2)IV(1) and megacomplex MCI(2)III(2)IV(2)).

It localises to the mitochondrion inner membrane. It catalyses the reaction 4 Fe(II)-[cytochrome c] + O2 + 8 H(+)(in) = 4 Fe(III)-[cytochrome c] + 2 H2O + 4 H(+)(out). Its function is as follows. Component of the cytochrome c oxidase, the last enzyme in the mitochondrial electron transport chain which drives oxidative phosphorylation. The respiratory chain contains 3 multisubunit complexes succinate dehydrogenase (complex II, CII), ubiquinol-cytochrome c oxidoreductase (cytochrome b-c1 complex, complex III, CIII) and cytochrome c oxidase (complex IV, CIV), that cooperate to transfer electrons derived from NADH and succinate to molecular oxygen, creating an electrochemical gradient over the inner membrane that drives transmembrane transport and the ATP synthase. Cytochrome c oxidase is the component of the respiratory chain that catalyzes the reduction of oxygen to water. Electrons originating from reduced cytochrome c in the intermembrane space (IMS) are transferred via the dinuclear copper A center (CU(A)) of subunit 2 and heme A of subunit 1 to the active site in subunit 1, a binuclear center (BNC) formed by heme A3 and copper B (CU(B)). The BNC reduces molecular oxygen to 2 water molecules using 4 electrons from cytochrome c in the IMS and 4 protons from the mitochondrial matrix. The protein is Cytochrome c oxidase subunit 3 (MT-CO3) of Felis catus (Cat).